A 494-amino-acid chain; its full sequence is Inosine-5'-monophosphate dehydrogenase (494 aa).

2 CBS domains span residues 93–154 (IIRN…NEKI) and 158–217 (MTTD…CKDM). Residues D251 and 301 to 303 (GIG) contribute to the NAD(+) site. G303 and G305 together coordinate K(+). Position 306 (S306) interacts with IMP. C308 lines the K(+) pocket. C308 acts as the Thioimidate intermediate in catalysis. IMP contacts are provided by residues 341 to 343 (DGG), 364 to 365 (GS), and 388 to 392 (YRGMG). The active-site Proton acceptor is R406. E421 provides a ligand contact to IMP. K(+) contacts are provided by E475, S476, and H477.

This sequence belongs to the IMPDH/GMPR family. Homotetramer. K(+) serves as cofactor.

It carries out the reaction IMP + NAD(+) + H2O = XMP + NADH + H(+). The protein operates within purine metabolism; XMP biosynthesis via de novo pathway; XMP from IMP: step 1/1. Its activity is regulated as follows. Mycophenolic acid (MPA) is a non-competitive inhibitor that prevents formation of the closed enzyme conformation by binding to the same site as the amobile flap. In contrast, mizoribine monophosphate (MZP) is a competitive inhibitor that induces the closed conformation. MPA is a potent inhibitor of mammalian IMPDHs but a poor inhibitor of the bacterial enzymes. MZP is a more potent inhibitor of bacterial IMPDH. Functionally, catalyzes the conversion of inosine 5'-phosphate (IMP) to xanthosine 5'-phosphate (XMP), the first committed and rate-limiting step in the de novo synthesis of guanine nucleotides, and therefore plays an important role in the regulation of cell growth. The chain is Inosine-5'-monophosphate dehydrogenase from Chlorobaculum parvum (strain DSM 263 / NCIMB 8327) (Chlorobium vibrioforme subsp. thiosulfatophilum).